Reading from the N-terminus, the 348-residue chain is Nicotinate-nucleotide--dimethylbenzimidazole phosphoribosyltransferase (348 aa).

Catalysis depends on Glu-317, which acts as the Proton acceptor.

The protein belongs to the CobT family.

It carries out the reaction 5,6-dimethylbenzimidazole + nicotinate beta-D-ribonucleotide = alpha-ribazole 5'-phosphate + nicotinate + H(+). It functions in the pathway nucleoside biosynthesis; alpha-ribazole biosynthesis; alpha-ribazole from 5,6-dimethylbenzimidazole: step 1/2. Catalyzes the synthesis of alpha-ribazole-5'-phosphate from nicotinate mononucleotide (NAMN) and 5,6-dimethylbenzimidazole (DMB). The chain is Nicotinate-nucleotide--dimethylbenzimidazole phosphoribosyltransferase from Clostridioides difficile (strain 630) (Peptoclostridium difficile).